A 107-amino-acid polypeptide reads, in one-letter code: Phosphoribosyl-ATP pyrophosphatase (107 aa).

It belongs to the PRA-PH family.

The protein resides in the cytoplasm. The enzyme catalyses 1-(5-phospho-beta-D-ribosyl)-ATP + H2O = 1-(5-phospho-beta-D-ribosyl)-5'-AMP + diphosphate + H(+). It participates in amino-acid biosynthesis; L-histidine biosynthesis; L-histidine from 5-phospho-alpha-D-ribose 1-diphosphate: step 2/9. This Mesorhizobium japonicum (strain LMG 29417 / CECT 9101 / MAFF 303099) (Mesorhizobium loti (strain MAFF 303099)) protein is Phosphoribosyl-ATP pyrophosphatase (hisE).